Consider the following 879-residue polypeptide: MPKLKITPMMQQYFKLKEQHPHTILFYRMGDFYEMFFEDAITASKILGITLTSRNKKSDSAQIPMCGIPYHALQGYLAKMVEAGKRVAICEQVEDPSTAQGIVKREVVQIVTPGVVTDNQLLDAKSNNFVTAISRGKNNRYGLSFLDITTGEFIVADFAGSDGEADILDQLTRLTPTELLVSEEELEDFAETIDLATTLIPGLCITPRPHHLFDFDQSHEKLLEHFAVISLDGFGCETLVEGQIAAAILLDYIEETQKSAIHHIEKLSRLELDAILQIDDSSRRNLELTQTIVGGNRSGSLLSVLDLTTTPMGARFLKQAILFPLQDRARILRRLNAVGYFFNNSEARHQIRELLDQVYDIERLNSRITLGSANGRDMLAMKQSLARLPEMLTELRKCDTDELIEIEQTLDTLEDLHQLLDKSIHPDPPTNIREGNLIREGYNAELDEIIVLLRDGKKLILDLEAKERERTGIAKLKVSYNRVFGYFIEVSRAQSSRVPEHYIRKQTLVNAERFITPELKEFETKVLGAEDRRLELEYQLFATVRNELASHSSRFLATAHQLALLDFYASAAEVSQQYNYHRPEIRDDGSLEIREGRHPVIERSLPAGKFVPNDVYLDQAENEILVITGPNMAGKSTVLRQTALIVLMAQMGYYVPADSARIGVVDRIFTRVGAMDDLRRGQSTFMVEMSETANILNNATPRSLVILDEIGRGTSTYDGLSIAWAVTEHLVQKDGIGVKTMFATHYHELTDLARRYARIQNYSIAVREWQKSVIFLHKLIKGGTSRSYGIQVAALAGVPAQVVERAHEILHSIESGDFLAGEKVGGQPQKELSEHKPHQPSLFAPPTDEIRTKIREMDLDELTPRQALDALYALKEMTV.

An ATP-binding site is contributed by 629–636 (GPNMAGKS). Residues 824–845 (VGGQPQKELSEHKPHQPSLFAP) form a disordered region.

Belongs to the DNA mismatch repair MutS family.

Its function is as follows. This protein is involved in the repair of mismatches in DNA. It is possible that it carries out the mismatch recognition step. This protein has a weak ATPase activity. This is DNA mismatch repair protein MutS from Desulfotalea psychrophila (strain LSv54 / DSM 12343).